A 215-amino-acid polypeptide reads, in one-letter code: Large ribosomal subunit protein uL3 (215 aa).

Glutamine 156 carries the post-translational modification N5-methylglutamine.

It belongs to the universal ribosomal protein uL3 family. In terms of assembly, part of the 50S ribosomal subunit. Forms a cluster with proteins L14 and L19. In terms of processing, methylated by PrmB.

In terms of biological role, one of the primary rRNA binding proteins, it binds directly near the 3'-end of the 23S rRNA, where it nucleates assembly of the 50S subunit. In Xylella fastidiosa (strain 9a5c), this protein is Large ribosomal subunit protein uL3.